Reading from the N-terminus, the 393-residue chain is Stearoyl-[acyl-carrier-protein] 9-desaturase, chloroplastic (393 aa).

A chloroplast-targeting transit peptide spans M1–M30. Fe cation is bound by residues E135, E173, H176, E259, and H262.

This sequence belongs to the fatty acid desaturase type 2 family. In terms of assembly, homodimer. It depends on Fe(2+) as a cofactor.

It localises to the plastid. It is found in the chloroplast. It carries out the reaction octadecanoyl-[ACP] + 2 reduced [2Fe-2S]-[ferredoxin] + O2 + 2 H(+) = (9Z)-octadecenoyl-[ACP] + 2 oxidized [2Fe-2S]-[ferredoxin] + 2 H2O. The protein operates within lipid metabolism; fatty acid metabolism. Functionally, converts stearoyl-ACP to oleoyl-ACP by introduction of a cis double bond between carbons 9 and 10 of the acyl chain. The protein is Stearoyl-[acyl-carrier-protein] 9-desaturase, chloroplastic of Solanum tuberosum (Potato).